A 364-amino-acid polypeptide reads, in one-letter code: Thymidine kinase (364 aa).

36 to 43 (GPFGVGKT) is an ATP binding site. The active-site Proton acceptor is glutamate 64. Residue glutamine 108 coordinates substrate. Residue arginine 201 participates in ATP binding. Residue arginine 207 coordinates substrate.

The protein belongs to the herpesviridae thymidine kinase family. Homodimer.

The enzyme catalyses thymidine + ATP = dTMP + ADP + H(+). Functionally, catalyzes the transfer of the gamma-phospho group of ATP to thymidine to generate dTMP in the salvage pathway of pyrimidine synthesis. The dTMP serves as a substrate for DNA polymerase during viral DNA replication. Allows the virus to be reactivated and to grow in non-proliferative cells lacking a high concentration of phosphorylated nucleic acid precursors. This is Thymidine kinase from Infectious laryngotracheitis virus (strain Thorne V882) (ILTV).